Reading from the N-terminus, the 406-residue chain is Dual-specificity RNA methyltransferase RlmN (406 aa).

E119 serves as the catalytic Proton acceptor. The 246-residue stretch at 125–370 (DKGRGTLCVS…AMVRRTRGDD (246 aa)) folds into the Radical SAM core domain. A disulfide bridge connects residues C132 and C375. Residues C139, C143, and C146 each coordinate [4Fe-4S] cluster. S-adenosyl-L-methionine contacts are provided by residues 192–193 (GE), S224, 246–248 (SLH), and N332. Residue C375 is the S-methylcysteine intermediate of the active site.

This sequence belongs to the radical SAM superfamily. RlmN family. The cofactor is [4Fe-4S] cluster.

It localises to the cytoplasm. It carries out the reaction adenosine(2503) in 23S rRNA + 2 reduced [2Fe-2S]-[ferredoxin] + 2 S-adenosyl-L-methionine = 2-methyladenosine(2503) in 23S rRNA + 5'-deoxyadenosine + L-methionine + 2 oxidized [2Fe-2S]-[ferredoxin] + S-adenosyl-L-homocysteine. It catalyses the reaction adenosine(37) in tRNA + 2 reduced [2Fe-2S]-[ferredoxin] + 2 S-adenosyl-L-methionine = 2-methyladenosine(37) in tRNA + 5'-deoxyadenosine + L-methionine + 2 oxidized [2Fe-2S]-[ferredoxin] + S-adenosyl-L-homocysteine. Its function is as follows. Specifically methylates position 2 of adenine 2503 in 23S rRNA and position 2 of adenine 37 in tRNAs. m2A2503 modification seems to play a crucial role in the proofreading step occurring at the peptidyl transferase center and thus would serve to optimize ribosomal fidelity. This chain is Dual-specificity RNA methyltransferase RlmN, found in Xylella fastidiosa (strain 9a5c).